We begin with the raw amino-acid sequence, 265 residues long: Beta-lactamase SHV-4 (265 aa).

The active-site Acyl-ester intermediate is the Ser45. A disulfide bridge connects residues Cys52 and Cys98. Glu143 functions as the Proton acceptor in the catalytic mechanism. Residue Lys209–Gly211 participates in substrate binding.

Belongs to the class-A beta-lactamase family.

The enzyme catalyses a beta-lactam + H2O = a substituted beta-amino acid. SHV enzymes hydrolyze broad spectrum cephalosporins notably cefotaxime and ceftazidime. SHV-4 causes particularly high levels of resistance to aztreonam and ceftazidime. This is Beta-lactamase SHV-4 (bla) from Klebsiella pneumoniae.